A 495-amino-acid polypeptide reads, in one-letter code: Meiosis-specific nuclear structural protein 1 (495 aa).

The segment at methionine 1–glutamate 315 is interaction with BBOF1. Coiled-coil stretches lie at residues glutamine 61 to methionine 215 and isoleucine 245 to leucine 361. Residues glutamate 172 to glycine 199 are disordered.

It belongs to the MNS1 family. As to quaternary structure, able to form oligomers. Microtubule inner protein component of sperm flagellar doublet microtubules. Interacts with ODAD1. Interacts with BBOF1. Expressed in trachea multiciliated cells.

It localises to the nucleus. The protein resides in the cytoplasm. The protein localises to the cytoskeleton. Its subcellular location is the cilium axoneme. It is found in the flagellum axoneme. Functionally, microtubule inner protein (MIP) part of the dynein-decorated doublet microtubules (DMTs) in cilia axoneme, which is required for motile cilia beating. May play a role in the control of meiotic division and germ cell differentiation through regulation of pairing and recombination during meiosis. Required for sperm flagella assembly. May play a role in the assembly and function of the outer dynein arm-docking complex (ODA-DC). ODA-DC mediates outer dynein arms (ODA) binding onto the axonemal doublet microtubules. The chain is Meiosis-specific nuclear structural protein 1 (MNS1) from Bos taurus (Bovine).